A 302-amino-acid polypeptide reads, in one-letter code: Capsid protein (302 aa).

Residues 217–302 (FHSGDAAKQS…HSSPQQTPKK (86 aa)) form a disordered region. The span at 254 to 271 (PRAGTPSSQKSGQSGQTT) shows a compositional bias: low complexity. The span at 288 to 302 (HKSTPHSSPQQTPKK) shows a compositional bias: polar residues.

The protein localises to the virion. In terms of biological role, capsid protein self-assembles to form a flexuous, filamentous capsid (Potential). The capsid encapsulates the single-stranded RNA genome. In Botryotinia fuckeliana (Noble rot fungus), this protein is Capsid protein.